A 97-amino-acid chain; its full sequence is Aspartyl/glutamyl-tRNA(Asn/Gln) amidotransferase subunit C (97 aa).

The protein belongs to the GatC family. As to quaternary structure, heterotrimer of A, B and C subunits.

The enzyme catalyses L-glutamyl-tRNA(Gln) + L-glutamine + ATP + H2O = L-glutaminyl-tRNA(Gln) + L-glutamate + ADP + phosphate + H(+). The catalysed reaction is L-aspartyl-tRNA(Asn) + L-glutamine + ATP + H2O = L-asparaginyl-tRNA(Asn) + L-glutamate + ADP + phosphate + 2 H(+). Its function is as follows. Allows the formation of correctly charged Asn-tRNA(Asn) or Gln-tRNA(Gln) through the transamidation of misacylated Asp-tRNA(Asn) or Glu-tRNA(Gln) in organisms which lack either or both of asparaginyl-tRNA or glutaminyl-tRNA synthetases. The reaction takes place in the presence of glutamine and ATP through an activated phospho-Asp-tRNA(Asn) or phospho-Glu-tRNA(Gln). The protein is Aspartyl/glutamyl-tRNA(Asn/Gln) amidotransferase subunit C of Prochlorococcus marinus (strain MIT 9301).